The primary structure comprises 203 residues: Potassium channel Cha6605_3372 (203 aa).

Topologically, residues 1 to 7 (MVEAPEQ) are cytoplasmic. The chain crosses the membrane as a helical span at residues 8 to 31 (SETGRIEAFSDGVFAIAITLLVLE). A RxxxFSD motif motif is present at residues 12 to 18 (RIEAFSD). At 32–52 (IKVPQHKIVETVGLVSSLLSL) the chain is on the extracellular side. The segment at 37–42 (HKIVET) is short helix H1. Residues 44-50 (GLVSSLL) form a short helix H2 region. Residues 53–78 (WPSYLAFLTSFASILVMWVNHHRIFS) form a helical membrane-spanning segment. Topologically, residues 79 to 84 (LVARTD) are cytoplasmic. The helical transmembrane segment at 85–110 (HAFFYWNGLLLMLVTFVPFPTALLAE) threads the bilayer. Residues 111 to 117 (YLIHPQA) lie on the Extracellular side of the membrane. A helical membrane pass occupies residues 118 to 142 (RVAASVYAGIFLAIAIVFNRLWKHA). Topologically, residues 143 to 154 (ATADRLLAQKAD) are cytoplasmic. The chain crosses the membrane as a helical span at residues 155–181 (RHEVDAITKQYRFGPGLYLVAFALSFI). At 182 to 183 (SV) the chain is on the extracellular side. A helical transmembrane segment spans residues 184 to 199 (WLSVGVCFVLAIYFAL). Residues 200–203 (RSNA) are Cytoplasmic-facing.

It belongs to the TMEM175 family. As to quaternary structure, homotetramer.

It localises to the membrane. The catalysed reaction is K(+)(in) = K(+)(out). In terms of biological role, potassium channel. The channel is permeable for K(+), Rb(+) and Cs(+), while it is unable to conduct Na(+). This chain is Potassium channel Cha6605_3372, found in Chamaesiphon minutus (strain ATCC 27169 / PCC 6605).